Consider the following 897-residue polypeptide: High molecular weight rhoptry protein 3 (897 aa).

Residues 1 to 24 (MRSKHLVTLFIITFLSFSTVKVWG) form the signal peptide. Intrachain disulfides connect Cys-157–Cys-231, Cys-244–Cys-253, Cys-262–Cys-276, Cys-421–Cys-620, and Cys-475–Cys-536. The helical transmembrane segment at 597-615 (FVLYFISIISVLYINEYYY) threads the bilayer. 2 disordered regions span residues 788–845 (KEQS…SNLK) and 859–897 (QLDK…ENEL). The segment covering 792–801 (KSTSAASTSD) has biased composition (polar residues). Residues 802-817 (ELSGSEGPSTESTSTG) show a composition bias toward low complexity. The residue at position 804 (Ser-804) is a Phosphoserine. The segment covering 820–832 (GEDKTTDNTYKEM) has biased composition (basic and acidic residues). Basic residues predominate over residues 865–876 (PKKKKSKRKKKR). Residues 877–889 (DSSSDRILLEESK) show a composition bias toward basic and acidic residues.

In terms of assembly, component of the RhopH complex, composed of CLAG3.1/CLAG3.2, RhopH2 and RhopH3 with a 1:1:1 subunit stoichiometry. Interacts with CLAG3.1/CLAG3.2. Interacts with CDPK1; the interaction promotes RhopH3 phosphorylation in merozoites. Proteolytically cleaved near C-terminus.

It is found in the host cell membrane. The protein resides in the parasitophorous vacuole membrane. It localises to the cytoplasmic vesicle. Its subcellular location is the secretory vesicle. The protein localises to the rhoptry. In terms of biological role, participates in the formation of new permeability pathways in Plasmodium-infected erythrocytes enabling the uptake of nutrients from the blood plasma. Required for maintaining invasion capacity of merozoites. Required for the trophozoite to schizont developmental transition of the intracellular parasite. The chain is High molecular weight rhoptry protein 3 from Plasmodium falciparum.